The chain runs to 534 residues: Putative ammonium transporter 1 (534 aa).

The next 11 membrane-spanning stretches (helical) occupy residues 31 to 51 (SFFL…FAYL), 69 to 89 (LLDS…LAYG), 115 to 135 (FFFQ…AVAE), 139 to 159 (FITY…VLTH), 184 to 204 (FAGS…AAWI), 223 to 243 (ILGH…FGFL), 263 to 283 (ALAM…YLGV), 291 to 311 (WTLL…CAGC), 318 to 338 (ACIW…KLMI), 346 to 366 (LDAF…SSII), and 401 to 421 (ICAL…FWIL).

It belongs to the ammonia transporter channel (TC 1.A.11.2) family.

Its subcellular location is the membrane. Its function is as follows. Involved in the uptake of ammonia. The chain is Putative ammonium transporter 1 (amt-1) from Caenorhabditis elegans.